A 1159-amino-acid chain; its full sequence is ABC transporter G family member 24 (1159 aa).

The next 2 helical transmembrane spans lie at 11-31 (FNSILKSILLLLLLFINGNNC) and 415-435 (VGSGVGFIGLTLLIGAIFLIF). The region spanning 454–707 (LSFHNISCYV…FIKQKIAGMT (254 aa)) is the ABC transporter domain. 497–504 (GLSGSGKT) serves as a coordination point for ATP. Residues 752-846 (QSTSPALSSN…DNNNKNNDDD (95 aa)) form a disordered region. Composition is skewed to low complexity over residues 759-768 (SSNSNNSDIN) and 775-784 (INNPHNQNIH). Basic residues predominate over residues 785 to 795 (HQQHHHHHRHI). A compositionally biased stretch (low complexity) spans 822–841 (DNINNNNNNNKVKNNDNNNK). One can recognise an ABC transmembrane type-2 domain in the interval 902 to 1154 (FLLRTTYFVH…LLAYVFLRFL (253 aa)). 6 helical membrane passes run 909-929 (FVHIFVGLTLGYLFWKLPANL), 937-957 (FGAMFFMTALLSFGSITSLDL), 1005-1025 (YMIGLRPGILHFIYFLISLVL), 1047-1067 (ANMVSILLLFVFLLFDGFLLA), 1074-1094 (YLIGLVWISFMSYGLEIPVVN), and 1135-1155 (VLLGMIVGYLLLAYVFLRFLV).

This sequence belongs to the ABC transporter superfamily. ABCG family. Eye pigment precursor importer (TC 3.A.1.204) subfamily.

It is found in the membrane. This chain is ABC transporter G family member 24 (abcG24), found in Dictyostelium discoideum (Social amoeba).